A 315-amino-acid polypeptide reads, in one-letter code: Transaldolase (315 aa).

The active-site Schiff-base intermediate with substrate is the K125.

Belongs to the transaldolase family. Type 1 subfamily. In terms of assembly, homodimer.

The protein localises to the cytoplasm. It catalyses the reaction D-sedoheptulose 7-phosphate + D-glyceraldehyde 3-phosphate = D-erythrose 4-phosphate + beta-D-fructose 6-phosphate. The protein operates within carbohydrate degradation; pentose phosphate pathway; D-glyceraldehyde 3-phosphate and beta-D-fructose 6-phosphate from D-ribose 5-phosphate and D-xylulose 5-phosphate (non-oxidative stage): step 2/3. In terms of biological role, transaldolase is important for the balance of metabolites in the pentose-phosphate pathway. The sequence is that of Transaldolase from Paracidovorax citrulli (strain AAC00-1) (Acidovorax citrulli).